The chain runs to 920 residues: Protein FAN (920 aa).

The 72-residue stretch at 176–247 folds into the GRAM domain; sequence RLARTSFDKN…QDVRRIYKRR (72 aa). Residues 189-286 enclose the BEACH-type PH domain; sequence SVSEKLHMEC…DRDDLYFYIA (98 aa). One can recognise a BEACH domain in the interval 290 to 575; sequence EHHAAEHTAE…QLFVTPHPRR (286 aa). WD repeat units follow at residues 631–661, 673–703, 715–743, 764–794, 806–836, and 887–917; these read IHKEAVTGIAVSCNGSSVFTTSQDSTLKMFS, FSNMALSSCLLLPGDTTVISSSWDNNVYFYS, GHDDAVSKICWHNDRLYSGSWDSTVKVWS, EHDVSVNTINLNAVSTLLVSGTKEGMVNIWD, CHSGTVCDAAFSPDSRHILSTGVDGCLNVID, and GHTGAVTCMWMNEQCSSIITGGEDRQIMFWK.

In terms of biological role, couples the p55 TNF-receptor (TNF-R55 / TNFR1) to neutral sphingomyelinase (N-SMASE). Specifically binds to the N-smase activation domain of TNF-R55. May regulate ceramide production by N-SMASE. The protein is Protein FAN (Nsmaf) of Mus musculus (Mouse).